The following is a 214-amino-acid chain: Charged multivesicular body protein 2b (214 aa).

A coiled-coil region spans residues 25-55; it reads QRTITRDRAALEKQERQLELEIKKMAKTGNK. The interval 179–201 is disordered; sequence AKAPSAARGLPSASTSKASTISD. Residues 190-199 show a composition bias toward polar residues; that stretch reads SASTSKASTI. The short motif at 202 to 212 is the MIT-interacting motif element; it reads EEIERQLKALG.

It belongs to the SNF7 family. Probable core component of the endosomal sorting required for transport complex III (ESCRT-III). ESCRT-III components are thought to multimerize to form a flat lattice on the perimeter membrane of the endosome.

Its subcellular location is the cytoplasm. It localises to the cytosol. The protein localises to the late endosome membrane. In terms of biological role, probable core component of the endosomal sorting required for transport complex III (ESCRT-III) which is involved in multivesicular bodies (MVBs) formation and sorting of endosomal cargo proteins into MVBs. MVBs contain intraluminal vesicles (ILVs) that are generated by invagination and scission from the limiting membrane of the endosome and mostly are delivered to lysosomes enabling degradation of membrane proteins, such as stimulated growth factor receptors, lysosomal enzymes and lipids. In Gallus gallus (Chicken), this protein is Charged multivesicular body protein 2b (CHMP2B).